Consider the following 107-residue polypeptide: UPF0145 protein CKO_02237 (107 aa).

It belongs to the UPF0145 family.

This is UPF0145 protein CKO_02237 from Citrobacter koseri (strain ATCC BAA-895 / CDC 4225-83 / SGSC4696).